The chain runs to 507 residues: Tyrosine protein-kinase src-2 (507 aa).

The segment covering 1-10 (MGSCIGKEDP) has biased composition (basic and acidic residues). Positions 1 to 52 (MGSCIGKEDPPPGATSPVHTSSTLGRESLPSHPRIPSIGPIAASSSGNTIDK) are disordered. G2 is lipidated: N-myristoyl glycine. The span at 35–47 (IPSIGPIAASSSG) shows a compositional bias: low complexity. Positions 57–118 (SQSANFVALF…PSNYVAREKS (62 aa)) constitute an SH3 domain. One can recognise an SH2 domain in the interval 124-216 (WYFGKMRRID…GLCVNLGAPC (93 aa)). Residues 240 to 494 (VRLIRQIGAG…LQWKLEDLFN (255 aa)) form the Protein kinase domain. ATP contacts are provided by residues 246–254 (IGAGQFGEV) and K268. D358 functions as the Proton acceptor in the catalytic mechanism. Phosphotyrosine is present on Y500.

Belongs to the protein kinase superfamily. Tyr protein kinase family. SRC subfamily. It depends on Mg(2+) as a cofactor. Requires Mn(2+) as cofactor. May be phosphorylated on Tyr-500 by csk-1. In terms of tissue distribution, expressed in vulva, cells around anus and pharyngeal muscles.

The catalysed reaction is L-tyrosyl-[protein] + ATP = O-phospho-L-tyrosyl-[protein] + ADP + H(+). Its activity is regulated as follows. May be inhibited by csk-1-mediated phosphorylation at Tyr-500. Non-receptor tyrosine-protein kinase which may play a role in larval and pharynx development. Unlike src-1, does not play a role in embryonic development. This chain is Tyrosine protein-kinase src-2, found in Caenorhabditis elegans.